A 227-amino-acid chain; its full sequence is (S)-2-haloacid dehalogenase (227 aa).

Asp10 (nucleophile) is an active-site residue. An (S)-2-haloacid-binding positions include 11–12, Arg41, and 118–119; these read LY and SN. Positions 175–180 are important for catalytic activity; that stretch reads SSNAWD.

Belongs to the HAD-like hydrolase superfamily. S-2-haloalkanoic acid dehalogenase family.

The catalysed reaction is an (S)-2-haloacid + H2O = a (2R)-2-hydroxycarboxylate + a halide anion + H(+). It catalyses the reaction (S)-2-chloropropanoate + H2O = (R)-lactate + chloride + H(+). In terms of biological role, catalyzes the hydrolytic dehalogenation of small (S)-2-haloalkanoic acids to yield the corresponding (R)-2-hydroxyalkanoic acids. Acts on acids of short chain lengths, C(2) to C(4), with inversion of configuration at C-2. Active with 2-halogenated carboxylic acids and converts only the S-isomer (or L-isomer) of 2-chloropropionic acid with inversion of configuration to produce R-lactate (or D-isomer). In Pseudomonas fluorescens, this protein is (S)-2-haloacid dehalogenase (dhl VII).